The primary structure comprises 33 residues: Zinc metalloproteinase-disintegrin-like moojenin (33 aa).

Positions 8–33 constitute a Disintegrin domain; that stretch reads PPVCGNELLEVGEECDCGTPENCQNE. 6 residues coordinate Ca(2+): valine 10, asparagine 13, leucine 15, glutamate 17, glutamate 20, and aspartate 23. 2 disulfide bridges follow: cysteine 11–cysteine 30 and cysteine 24–cysteine 30.

It belongs to the venom metalloproteinase (M12B) family. P-III subfamily. P-IIIb sub-subfamily. In terms of assembly, monomer. The cofactor is Zn(2+). The N-terminus (from the N-terminal region of the metalloproteinase domain) is blocked. In terms of tissue distribution, expressed by the venom gland.

It localises to the secreted. Its activity is regulated as follows. The fibrinogenolytic and coagulant activities of the moojenin were abolished by preincubation with EDTA, 1,10-phenanthroline and beta-mercaptoethanol. Functionally, metalloproteinase moojenin: snake venom metalloproteinase that cleaves both alpha- and beta-chains of fibrinogen, but not the gamma-chain. Shows a coagulant activity on bovine plasma about 3.1 fold lower than crude venom. Renders the blood incoagulable when intraperitoneally administered into mice. Induces necrosis in liver and muscle, but does not cause histological alterations in mouse lungs, kidney or heart. The protein is Zinc metalloproteinase-disintegrin-like moojenin of Bothrops moojeni (Lance-headed viper).